Reading from the N-terminus, the 228-residue chain is Cytochrome b-c1 complex subunit Rieske, mitochondrial (228 aa).

The N-terminal 26 residues, 1-26 (MLAKQFISKSLASSLRRLLPVSSTAS), are a transit peptide targeting the mitochondrion. Residues 27–63 (SLKGSMMTIPKFTSIRTYTDSPEMPDFSEYQTKSTGD) are Mitochondrial matrix-facing. Residues 64–93 (RSRVISYAMVGTMGALTAAGAQATVHDFLA) form a helical membrane-spanning segment. Topologically, residues 94 to 228 (SWSASADVLA…TFEGSKIIIG (135 aa)) are mitochondrial intermembrane. Residues 139-227 (IQEANSVDIS…YTFEGSKIII (89 aa)) form the Rieske domain. The [2Fe-2S] cluster site is built by Cys-172, His-174, Cys-191, and His-194. A disulfide bridge connects residues Cys-177 and Cys-193.

It belongs to the Rieske iron-sulfur protein family. Component of the ubiquinol-cytochrome c oxidoreductase (cytochrome b-c1 complex, complex III, CIII), a multisubunit enzyme composed of 3 respiratory subunits cytochrome b, cytochrome c1 and Rieske protein, 2 core protein subunits, and additional low-molecular weight protein subunits. The complex exists as an obligatory dimer and forms supercomplexes (SCs) in the inner mitochondrial membrane with cytochrome c oxidase (complex IV, CIV). [2Fe-2S] cluster is required as a cofactor.

The protein localises to the mitochondrion inner membrane. The catalysed reaction is a quinol + 2 Fe(III)-[cytochrome c](out) = a quinone + 2 Fe(II)-[cytochrome c](out) + 2 H(+)(out). Component of the ubiquinol-cytochrome c oxidoreductase, a multisubunit transmembrane complex that is part of the mitochondrial electron transport chain which drives oxidative phosphorylation. The respiratory chain contains 3 multisubunit complexes succinate dehydrogenase (complex II, CII), ubiquinol-cytochrome c oxidoreductase (cytochrome b-c1 complex, complex III, CIII) and cytochrome c oxidase (complex IV, CIV), that cooperate to transfer electrons derived from NADH and succinate to molecular oxygen, creating an electrochemical gradient over the inner membrane that drives transmembrane transport and the ATP synthase. The cytochrome b-c1 complex catalyzes electron transfer from ubiquinol to cytochrome c, linking this redox reaction to translocation of protons across the mitochondrial inner membrane, with protons being carried across the membrane as hydrogens on the quinol. In the process called Q cycle, 2 protons are consumed from the matrix, 4 protons are released into the intermembrane space and 2 electrons are passed to cytochrome c. The Rieske protein is a catalytic core subunit containing a [2Fe-2S] iron-sulfur cluster. It cycles between 2 conformational states during catalysis to transfer electrons from the quinol bound in the Q(0) site in cytochrome b to cytochrome c1. This Schizosaccharomyces pombe (strain 972 / ATCC 24843) (Fission yeast) protein is Cytochrome b-c1 complex subunit Rieske, mitochondrial (rip1).